Consider the following 266-residue polypeptide: Receptor-like protein 5 (266 aa).

Residues 1–19 form the signal peptide; that stretch reads MINYRHIVFCLCVMVVVDS. The Extracellular portion of the chain corresponds to 20–169; it reads RLTPYLAAIE…PTRNKNKPTV (150 aa). LRR repeat units lie at residues 93 to 117 and 119 to 143; these read LTSL…ITKL and NLTI…IVIL. A glycan (N-linked (GlcNAc...) asparagine) is linked at N119. Residues 170 to 190 traverse the membrane as a helical segment; the sequence is LVLLLGILVGLVVAGGASFGF. Residues 191 to 266 lie on the Cytoplasmic side of the membrane; the sequence is YLYRIRKQPK…TNQNPHLPYM (76 aa).

The protein belongs to the RLP family.

The protein localises to the cell membrane. This Arabidopsis thaliana (Mouse-ear cress) protein is Receptor-like protein 5.